A 544-amino-acid polypeptide reads, in one-letter code: Chaperonin GroEL 2 (544 aa).

ATP is bound by residues 30–33, 87–91, G415, 480–482, and D496; these read TLGP, DGTTT, and NAA.

This sequence belongs to the chaperonin (HSP60) family. In terms of assembly, forms a cylinder of 14 subunits composed of two heptameric rings stacked back-to-back. Interacts with the co-chaperonin GroES.

It localises to the cytoplasm. It carries out the reaction ATP + H2O + a folded polypeptide = ADP + phosphate + an unfolded polypeptide.. Functionally, together with its co-chaperonin GroES, plays an essential role in assisting protein folding. The GroEL-GroES system forms a nano-cage that allows encapsulation of the non-native substrate proteins and provides a physical environment optimized to promote and accelerate protein folding. The polypeptide is Chaperonin GroEL 2 (Albidiferax ferrireducens (strain ATCC BAA-621 / DSM 15236 / T118) (Rhodoferax ferrireducens)).